A 627-amino-acid chain; its full sequence is Protein EXECUTER 2, chloroplastic (627 aa).

Disordered regions lie at residues 1 to 34 (MSAA…PSAA), 212 to 277 (PTKG…AKDS), and 308 to 359 (EAEL…SKSP). A chloroplast-targeting transit peptide spans 1–45 (MSAATACASPAAARPPLHIPLRSPPSAAHLPSAAASRRASSAACR). The segment covering 217-229 (SSASSVSSATAES) has biased composition (low complexity). Composition is skewed to acidic residues over residues 308 to 321 (EAEL…ELVQ) and 331 to 353 (SLED…SDSA).

It is found in the plastid. Its subcellular location is the chloroplast. Together with EX1, enables higher plants to perceive singlet oxygen as a stress signal in plastid that activates a genetically determined nuclear stress response program which triggers a programmed cell death (PCD). This transfer of singlet oxygen-induced stress-related signals from the plastid to the nucleus that triggers genetically controlled PCD pathway is unique to photosynthetic eukaryotes and operates under mild stress conditions, impeding photosystem II (PSII) without causing photooxidative damage of the plant. The polypeptide is Protein EXECUTER 2, chloroplastic (Oryza sativa subsp. japonica (Rice)).